The primary structure comprises 209 residues: MGVDDLVNDVMRLKGSRVREIIERRMREFERERSDEELFKELVFCLLTANFSAEGGLRILESLGDGIFTLSEEELAAKLAELGHRYPRKRAEFIVEARKLIPILRDIISSFRDERLLREWLVKNVKGLGYKEASHFLRNIGFKNVSIIDYHILDLLMKYGILEEKPKSLSRARYLMIESILEEISRRTGINLGELDLYLWYIETGKVLK.

Active-site residues include Lys131 and Asp149.

This sequence belongs to the type-2 OGG1 family.

The enzyme catalyses 2'-deoxyribonucleotide-(2'-deoxyribose 5'-phosphate)-2'-deoxyribonucleotide-DNA = a 3'-end 2'-deoxyribonucleotide-(2,3-dehydro-2,3-deoxyribose 5'-phosphate)-DNA + a 5'-end 5'-phospho-2'-deoxyribonucleoside-DNA + H(+). In terms of biological role, catalyzes the excision of an oxidatively damaged form of guanine (7,8-dihydro-8-oxoguanine = 8-oxoG) from DNA. Also cleaves the DNA backbone at apurinic/apyrimidinic sites (AP sites). This chain is 8-oxoguanine DNA glycosylase/AP lyase, found in Korarchaeum cryptofilum (strain OPF8).